The chain runs to 249 residues: Pleckstrin homology domain-containing family F member 2 (249 aa).

The 97-residue stretch at 35–131 (VLIGEGVLTK…WMNHINKCVS (97 aa)) folds into the PH domain. Residues 152–212 (DSEATVCMRC…ICDSCYDLLS (61 aa)) form an FYVE-type zinc finger. Zn(2+) contacts are provided by C158, C161, C175, C178, C183, C186, C204, and C207. A compositionally biased stretch (polar residues) spans 219 to 232 (CQSTRSDSYSQSPK). The disordered stretch occupies residues 219–249 (CQSTRSDSYSQSPKSSLNDASDDDDDEDSSD). The span at 238–249 (ASDDDDDEDSSD) shows a compositional bias: acidic residues.

Its subcellular location is the early endosome membrane. The protein localises to the endoplasmic reticulum. May play a role in early endosome fusion upstream of RAB5, hence regulating receptor trafficking and fluid-phase transport. Enhances cellular sensitivity to TNF-induced apoptosis. The sequence is that of Pleckstrin homology domain-containing family F member 2 (PLEKHF2) from Gallus gallus (Chicken).